A 214-amino-acid polypeptide reads, in one-letter code: Adenylate kinase (214 aa).

10–15 serves as a coordination point for ATP; it reads GAGKGT. An NMP region spans residues 30 to 59; sequence STGDMLRAAVKSGSELGKQAKDIMDAGKLV. Residues Thr31, Arg36, 57-59, 85-88, and Gln92 contribute to the AMP site; these read KLV and GFPR. Positions 122 to 159 are LID; sequence GRRVHAPSGRVYHVKFNPPKVEGKDDVTGEELTTRKDD. Residues Arg123 and 132-133 contribute to the ATP site; that span reads VY. Residues Arg156 and Arg167 each coordinate AMP. Lys192 carries the N6-acetyllysine modification. Lys200 lines the ATP pocket.

This sequence belongs to the adenylate kinase family. As to quaternary structure, monomer.

The protein resides in the cytoplasm. It catalyses the reaction AMP + ATP = 2 ADP. It participates in purine metabolism; AMP biosynthesis via salvage pathway; AMP from ADP: step 1/1. Functionally, catalyzes the reversible transfer of the terminal phosphate group between ATP and AMP. Plays an important role in cellular energy homeostasis and in adenine nucleotide metabolism. The protein is Adenylate kinase of Escherichia coli O45:K1 (strain S88 / ExPEC).